We begin with the raw amino-acid sequence, 143 residues long: uncharacterized protein (143 aa).

A disordered region spans residues 1–37 (MSAPASSSAIAPSQPTAPGHARHSASWSASASDPSGA).

The protein belongs to the dynein light chain Tctex-type family.

This is an uncharacterized protein from Mycosarcoma maydis (Corn smut fungus).